The sequence spans 296 residues: Cytidine deaminase (296 aa).

CMP/dCMP-type deaminase domains lie at 47–167 and 186–296; these read TEAE…FGPK and DSSD…VDPV. 88 to 90 is a binding site for substrate; it reads NLE. Histidine 101 contributes to the Zn(2+) binding site. The active-site Proton donor is the glutamate 103. Zn(2+)-binding residues include cysteine 128 and cysteine 131.

It belongs to the cytidine and deoxycytidylate deaminase family. Homodimer. Requires Zn(2+) as cofactor.

It catalyses the reaction cytidine + H2O + H(+) = uridine + NH4(+). The enzyme catalyses 2'-deoxycytidine + H2O + H(+) = 2'-deoxyuridine + NH4(+). Its function is as follows. This enzyme scavenges exogenous and endogenous cytidine and 2'-deoxycytidine for UMP synthesis. This Shewanella sp. (strain W3-18-1) protein is Cytidine deaminase.